Here is a 662-residue protein sequence, read N- to C-terminus: Methyl-accepting chemotaxis protein McpB (662 aa).

Residues 1–16 are Cytoplasmic-facing; that stretch reads MKTFINWLKKPSISKK. Residues 17-37 form a helical membrane-spanning segment; the sequence is LIVSFIAILIIPILILEFSSY. Residues 38-282 are Extracellular-facing; that stretch reads RSASGKLDQE…IKDASKSVLT (245 aa). The 77-residue stretch at 153–229 folds into the Cache domain; sequence VTDPYVAASD…KAGEKLSGDW (77 aa). The helical transmembrane segment at 283–303 threads the bilayer; that stretch reads TGMIVLIASIVAGGILILFIV. In terms of domain architecture, HAMP spans 304–356; sequence RSITKPLKRLVQSSKTISRGDLTETIEIHSKDELGELGESFNEMGQSLRSLIS. Over 304-662 the chain is Cytoplasmic; that stretch reads RSITKPLKRL…RDLTKQFKIE (359 aa). Glutamate methyl ester (Gln) is present on residues glutamine 371 and glutamine 595. In terms of domain architecture, Methyl-accepting transducer spans 375 to 611; the sequence is SAGQTSKATE…HVSAAVSGIA (237 aa). Residues glutamate 630 and glutamate 637 each carry the glutamate methyl ester (Glu) modification.

The protein belongs to the methyl-accepting chemotaxis (MCP) protein family. Interacts with FloT. Post-translationally, some glutamine residues are deamidated to glutamate by CheD and subsequently methylated. The demethylation is selective. Gln-371 is demethylated only upon asparagine addition whereas Glu-637 is demethylated only upon asparagine removal. Glu-630 appears indiscriminate and is demethylated upon both addition and removal of asparagine.

It is found in the cell membrane. The protein resides in the membrane raft. Its function is as follows. Chemotactic-signal transducers respond to changes in the concentration of attractants and repellents in the environment, transduce a signal from the outside to the inside of the cell, and facilitate sensory adaptation through the variation of the level of methylation. All amino acids serve as attractants in B.subtilis, they appear to cause an increase in the turnover methyl groups, leading to methylation of an unidentified acceptor, while repellents have been shown to cause a decrease in methyl group turnover. The methyl groups are added by a methyltransferase and removed by a methylesterase. McpB is required for taxis towards asparagine, aspartate, glutamine, and histidine. This chain is Methyl-accepting chemotaxis protein McpB (mcpB), found in Bacillus subtilis (strain 168).